The primary structure comprises 1155 residues: Pesticidal crystal protein Cry1Ab (1155 aa).

Belongs to the delta endotoxin family.

Its function is as follows. Promotes colloidosmotic lysis by binding to the midgut epithelial cells of many lepidopteran larvae. This chain is Pesticidal crystal protein Cry1Ab (cry1Ab), found in Bacillus thuringiensis subsp. aizawai.